An 83-amino-acid chain; its full sequence is MKLTCALIVAMLFLTACQLTTTDDSRGRQKYPTERLRVKMRNPKLSKLTKTCDPPGDSCSRWYNHCCSKLCTSRNSGPTCSRP.

The signal sequence occupies residues 1-22 (MKLTCALIVAMLFLTACQLTTT). Residues 23–50 (DDSRGRQKYPTERLRVKMRNPKLSKLTK) constitute a propeptide that is removed on maturation. 3 disulfide bridges follow: cysteine 52-cysteine 67, cysteine 59-cysteine 71, and cysteine 66-cysteine 80.

The protein belongs to the conotoxin O1 superfamily. As to expression, expressed by the venom duct.

It localises to the secreted. The protein is Conotoxin LiCr95 of Conus lividus (Livid cone).